The chain runs to 743 residues: TSL-kinase interacting protein 1 (743 aa).

Residues 53 to 104 (RQWAAWTHQEEESFFTALRQVGKNFEKITSRVQSKNKDQVRHYYYRLVRRMN) form the SANT domain. Disordered stretches follow at residues 486 to 523 (SGVHDRPARSRDDYEPASTSITPLEHLSGGNAQSPGEW) and 626 to 679 (SPKG…TPCG). The segment covering 488 to 499 (VHDRPARSRDDY) has biased composition (basic and acidic residues).

As to quaternary structure, interacts only with active kinase forms of TOUSLED. Interacts with SNL1. Phosphorylated in vitro by TOUSLED. In terms of tissue distribution, expressed in flowers, roots and leaves.

The protein resides in the nucleus. The polypeptide is TSL-kinase interacting protein 1 (TKI1) (Arabidopsis thaliana (Mouse-ear cress)).